We begin with the raw amino-acid sequence, 201 residues long: Probable quinol oxidase subunit 3 (201 aa).

5 consecutive transmembrane segments (helical) span residues 20–40, 62–82, 91–111, 133–153, and 180–200; these read LGFWVFLTAEFSLFGTLFATL, LVLIMTFALLISSYTCGIAIY, LMLIWMIITVLLGMVFVGFEI, FFILLGTHGAHVSLGIVWIIC, and FLDVVWIFIFTAVYMIGMVFS.

It belongs to the cytochrome c oxidase subunit 3 family.

Its subcellular location is the cell membrane. It carries out the reaction 2 a quinol + O2 = 2 a quinone + 2 H2O. Its function is as follows. Catalyzes quinol oxidation with the concomitant reduction of oxygen to water. The chain is Probable quinol oxidase subunit 3 (qoxC) from Staphylococcus saprophyticus subsp. saprophyticus (strain ATCC 15305 / DSM 20229 / NCIMB 8711 / NCTC 7292 / S-41).